The chain runs to 1774 residues: 6-methylsalicylic acid synthase (1774 aa).

Residues 1-14 (MHSAATSTYPSGKT) are compositionally biased toward polar residues. The disordered stretch occupies residues 1–21 (MHSAATSTYPSGKTSPAPVGT). A Ketosynthase family 3 (KS3) domain is found at 32–457 (SNDVAVVGMA…GTVSHAVIEE (426 aa)). An acyltransferase region spans residues 186 to 238 (RISYHLNLMGPSTAVDAACASSLVAIHHGVQAIRLGESKVAIVGGVNALCGPG). Active-site for beta-ketoacyl synthase activity residues include Cys204, His339, and His379. The tract at residues 642-676 (NGITPQAVIGHSVGEIAASVVAGALSPAEGALIVT) is acetyl/malonyl transferases. Ser653 functions as the For malonyltransferase activity in the catalytic mechanism. Positions 926-1045 (HTLLGQRIPV…AYWDRKVAGS (120 aa)) are N-terminal hotdog fold. The PKS/mFAS DH domain occupies 926-1202 (HTLLGQRIPV…FSEIEGTPGV (277 aa)). His958 functions as the Proton acceptor; for dehydratase activity in the catalytic mechanism. Positions 1059-1202 (VTKLADNFSI…FSEIEGTPGV (144 aa)) are C-terminal hotdog fold. Asp1123 (proton donor; for dehydratase activity) is an active-site residue. The tract at residues 1403–1450 (GPRLLPRPEGTYLITGGLGVLGLEVADFLVEKGARRLLLISRRALPPR) is 2-oxoacyl reductase. NADP(+) is bound at residue 1419–1424 (GLGVLG). One can recognise a Carrier domain in the interval 1698 to 1772 (AYLDEKIRGC…HLAVWFAEKL (75 aa)). Ser1732 is modified (O-(pantetheine 4'-phosphoryl)serine).

As to quaternary structure, homomultimer.

The catalysed reaction is 3 malonyl-CoA + acetyl-CoA + NADPH + 3 H(+) = 6-methylsalicylate + 3 CO2 + NADP(+) + 4 CoA + H2O. It functions in the pathway mycotoxin biosynthesis; patulin biosynthesis. In terms of biological role, this multifunctional enzyme is a polyketide synthase. It catalyzes a total of 11 steps by seven different component enzymes, in the biosynthesis of the antibiotic patulin. The polypeptide is 6-methylsalicylic acid synthase (Penicillium patulum (Penicillium griseofulvum)).